A 145-amino-acid chain; its full sequence is Basic phospholipase A2 S2-22 (145 aa).

The first 19 residues, 1-19 (MYPAHLLVLLAVCVSLLGA), serve as a signal peptide directing secretion. The propeptide occupies 20–27 (SDIPPQPL). 7 disulfide bridges follow: Cys-38-Cys-99, Cys-54-Cys-144, Cys-56-Cys-72, Cys-71-Cys-127, Cys-78-Cys-120, Cys-88-Cys-113, and Cys-106-Cys-118. Positions 55, 57, and 59 each coordinate Ca(2+). The active site involves His-75. Asp-76 provides a ligand contact to Ca(2+). Asp-121 is an active-site residue.

It belongs to the phospholipase A2 family. Group I subfamily. D49 sub-subfamily. Ca(2+) serves as cofactor. Expressed by the venom gland.

It is found in the secreted. It catalyses the reaction a 1,2-diacyl-sn-glycero-3-phosphocholine + H2O = a 1-acyl-sn-glycero-3-phosphocholine + a fatty acid + H(+). Its function is as follows. Snake venom phospholipase A2 (PLA2) that inhibits collagen-induced platelet aggregation. PLA2 catalyzes the calcium-dependent hydrolysis of the 2-acyl groups in 3-sn-phosphoglycerides. This Austrelaps superbus (Lowland copperhead snake) protein is Basic phospholipase A2 S2-22.